Consider the following 653-residue polypeptide: Choline transporter-like protein 3 (653 aa).

A helical transmembrane segment spans residues W34 to V54. 2 N-linked (GlcNAc...) asparagine glycosylation sites follow: N136 and N151. The next 5 helical transmembrane spans lie at D213–F233, I243–Y263, V284–V304, L334–L354, and L384–G404. 3 N-linked (GlcNAc...) asparagine glycosylation sites follow: N412, N503, and N521. A run of 2 helical transmembrane segments spans residues F534 to A554 and V563 to L583. Residues R632 to R653 are disordered. A compositionally biased stretch (basic and acidic residues) spans Q634–E644.

The protein belongs to the CTL (choline transporter-like) family.

The protein resides in the membrane. The protein is Choline transporter-like protein 3 (SLC44A3) of Homo sapiens (Human).